Here is a 130-residue protein sequence, read N- to C-terminus: Small ribosomal subunit protein uS8 (130 aa).

Belongs to the universal ribosomal protein uS8 family. In terms of assembly, part of the 30S ribosomal subunit. Contacts proteins S5 and S12.

One of the primary rRNA binding proteins, it binds directly to 16S rRNA central domain where it helps coordinate assembly of the platform of the 30S subunit. This is Small ribosomal subunit protein uS8 from Pectobacterium atrosepticum (strain SCRI 1043 / ATCC BAA-672) (Erwinia carotovora subsp. atroseptica).